Here is a 295-residue protein sequence, read N- to C-terminus: Replication-associated protein A (295 aa).

Positions 1–31 (MSSLPVSESEGEGSGTSVQVPSRGGQVTPGE) are disordered. The CRESS-DNA virus Rep endonuclease domain maps to 35 to 138 (SLRTKHVFLT…PESSWEFGKF (104 aa)). Positions 42–45 (FLTY) match the RCR-1 motif. 3 residues coordinate a divalent metal cation: Glu76, His84, and His86. Positions 84 to 86 (HLH) match the RCR-2 motif. Tyr124 serves as the catalytic For DNA cleavage activity. The short motif at 124–127 (YCMK) is the RCR-3 element. Residues 192–204 (SANALFPDPPQTY) form an oligomerization region.

This sequence belongs to the geminiviridae Rep protein family. As to quaternary structure, homooligomer. Part of the C- and V-complexes which are RepA-Rep-DNA complexes involved in the c-sense and v-sense transcription.

Its subcellular location is the host nucleus. It localises to the host cytoplasm. In terms of biological role, implicated in enhancement of V-sense gene expression. Acts a an inhibitor of C-sense gene transcription. The protein is Replication-associated protein A of Avena sativa (Oat).